Reading from the N-terminus, the 682-residue chain is Solute carrier organic anion transporter family member 2B1 (682 aa).

The disordered stretch occupies residues 1-30 (MPDRSTKATMGAEDIHERKVSMEPRDSHQD). Residues 1–41 (MPDRSTKATMGAEDIHERKVSMEPRDSHQDAQPRGMFQNIK) are Cytoplasmic-facing. The span at 13 to 30 (EDIHERKVSMEPRDSHQD) shows a compositional bias: basic and acidic residues. Phosphoserine is present on Ser-21. The helical transmembrane segment at 42 to 61 (FFVLCHSILQLAQLMISGYL) threads the bilayer. Over 62–80 (KSSISTVEKRFGLSSQTSG) the chain is Extracellular. The chain crosses the membrane as a helical span at residues 81–101 (LLAAFNEVGNISLILFVSYFG). Topologically, residues 102 to 107 (SRVHRP) are cytoplasmic. The chain crosses the membrane as a helical span at residues 108 to 132 (RMIGCGAILVAVAGLLMALPHFISE). Residues 133 to 176 (PYRYDHSSPDRSQDFEASLCLPTTMAPASALSNDSCSSRTETKH) lie on the Extracellular side of the membrane. Asn-165 carries an N-linked (GlcNAc...) asparagine glycan. Residues 177 to 206 (LTMVGIMFTAQTLLGIGGVPIQPFGISYID) traverse the membrane as a helical segment. At 207–225 (DFAHHSNSPLYLGILFAIT) the chain is on the cytoplasmic side. A helical transmembrane segment spans residues 226-246 (MMGPGLAYGLGSLMLRLYVDI). Over 247-264 (DRMPEGGINLTTKDPRWV) the chain is Extracellular. The N-linked (GlcNAc...) asparagine glycan is linked to Asn-255. The helical transmembrane segment at 265–289 (GAWWLGFLISAGLVVLAASPYFFFP) threads the bilayer. The Cytoplasmic segment spans residues 290-354 (REMPKEKYEL…IKVFPRVLLR (65 aa)). Residues Ser-311 and Ser-314 each carry the phosphoserine modification. A helical transmembrane segment spans residues 355–376 (TLRHPIFLLVVLSQVCTSSMVA). At 377–396 (GTATFLPKFLERQFSITASF) the chain is on the extracellular side. A helical transmembrane segment spans residues 397-420 (ANLLLGCLTIPLAIVGIVVGGVLV). Residues 421–424 (KRLH) are Cytoplasmic-facing. The helical transmembrane segment at 425–448 (LSPMQCSALCLLGSLLCLLLSLPL) threads the bilayer. The Extracellular segment spans residues 449–552 (FFIGCSTHHI…SACSRLVLPF (104 aa)). One can recognise a Kazal-like domain in the interval 471–531 (PSLFPGCSEP…VFYTNCSCVA (61 aa)). Disulfide bonds link Cys-477-Cys-508, Cys-483-Cys-504, and Cys-492-Cys-529. N-linked (GlcNAc...) asparagine glycosylation is found at Asn-526 and Asn-533. A helical membrane pass occupies residues 553–575 (ILLISLGAAVASITHTPSFMLIL). Topologically, residues 576 to 584 (RGVKKEDKT) are cytoplasmic. A helical transmembrane segment spans residues 585–610 (LAVGMQFMLLRVLAWMPSPVIHGSAI). Residues 611–643 (DTTCVHWALTCGRRAVCRYYDHDLLRNRFIGLQ) lie on the Extracellular side of the membrane. The helical transmembrane segment at 644–661 (FFFKSGSLVCFALVLAIL) threads the bilayer. The Cytoplasmic portion of the chain corresponds to 662–682 (RQQSREASTKATVKSSDLQEL).

It belongs to the organo anion transporter (TC 2.A.60) family. As to expression, expressed in liver, kidney, heart, lung and retina. Widely distributed in all brain regions.

It is found in the cell membrane. It localises to the basal cell membrane. The protein localises to the apical cell membrane. It carries out the reaction coproporphyrin III(out) = coproporphyrin III(in). The catalysed reaction is substance P(out) = substance P(in). The enzyme catalyses taurocholate(out) = taurocholate(in). It catalyses the reaction prostaglandin E1(out) = prostaglandin E1(in). It carries out the reaction prostaglandin E2(out) = prostaglandin E2(in). The catalysed reaction is prostaglandin D2(out) = prostaglandin D2(in). The enzyme catalyses leukotriene C4(out) = leukotriene C4(in). It catalyses the reaction L-thyroxine(out) = L-thyroxine(in). Its function is as follows. Mediates the Na(+)-independent transport of organic anions such as taurocholate, the prostaglandins D2 (PGD2), E1 (PGE1) and E2 (PGE2), leukotriene C4, thromboxane B2 and L-thyroxine. Also plays a role in the reuptake of neuropeptides such as substance P/TAC1 and vasoactive intestinal peptide/VIP released from retinal neurons. May act as a heme transporter that promotes cellular iron availability. Also transports heme by-product coproporphyrin III (CPIII), and may be involved in their hepatic disposition. May contribute to regulate the transport of organic compounds in testis across the blood-testis-barrier. Shows a pH-sensitive substrate specificity which may be ascribed to the protonation state of the binding site and leads to a stimulation of substrate transport in an acidic microenvironment. The exact transport mechanism has not been yet deciphered but most likely involves an anion exchange, coupling the cellular uptake of organic substrate with the efflux of an anionic compound. Hydrogencarbonate/HCO3(-) acts as a probable counteranion that exchanges for organic anions. Cytoplasmic glutamate may also act as counteranion in the placenta. This is Solute carrier organic anion transporter family member 2B1 from Rattus norvegicus (Rat).